The primary structure comprises 183 residues: MLQRFFATALAIFVVLLGGCSATSGLQAYVDSYDGYEFLYPRGWVQVQVEDPVDVVFHDIIETTENVSVVVNTVASTKSLEELGSPEEVGDRLLRNIIAPSESGRSSALIAATSQKADDKTYYILEYAVTLPGDGNTAQQRHNLSSIAVSRGKVYTLSVSAPEERWPKVEDQFKTIVSSFTVY.

The signal sequence occupies residues 1 to 19; that stretch reads MLQRFFATALAIFVVLLGG. Cys20 carries the N-palmitoyl cysteine lipid modification. Cys20 carries the S-diacylglycerol cysteine lipid modification. Residues Asp31, Asp34, Asp54, His58, Thr63, Glu87, Asp91, His142, Glu163, and Glu164 each coordinate Zn(2+).

Belongs to the PsbP family. CyanoP subfamily. As to quaternary structure, monomer. Present in very small amounts in PSII. Zn(2+) serves as cofactor.

The protein resides in the cellular thylakoid membrane. In terms of biological role, plays a role in the early stages of photosystem II (PSII) assembly; binds to D2 (psbD) and may facilitate its incorporation into PSII. Present in less than 1% of PSII preparations. In Thermosynechococcus vestitus (strain NIES-2133 / IAM M-273 / BP-1), this protein is CyanoP.